Here is a 388-residue protein sequence, read N- to C-terminus: Succinyl-diaminopimelate desuccinylase (388 aa).

His-84 contacts Zn(2+). Residue Asp-86 is part of the active site. Asp-115 lines the Zn(2+) pocket. Glu-146 functions as the Proton acceptor in the catalytic mechanism. Residues Glu-147, Glu-175, and His-360 each contribute to the Zn(2+) site.

This sequence belongs to the peptidase M20A family. DapE subfamily. In terms of assembly, homodimer. Zn(2+) is required as a cofactor. Co(2+) serves as cofactor.

It carries out the reaction N-succinyl-(2S,6S)-2,6-diaminopimelate + H2O = (2S,6S)-2,6-diaminopimelate + succinate. It functions in the pathway amino-acid biosynthesis; L-lysine biosynthesis via DAP pathway; LL-2,6-diaminopimelate from (S)-tetrahydrodipicolinate (succinylase route): step 3/3. Its function is as follows. Catalyzes the hydrolysis of N-succinyl-L,L-diaminopimelic acid (SDAP), forming succinate and LL-2,6-diaminopimelate (DAP), an intermediate involved in the bacterial biosynthesis of lysine and meso-diaminopimelic acid, an essential component of bacterial cell walls. The polypeptide is Succinyl-diaminopimelate desuccinylase (Helicobacter pylori (strain G27)).